The chain runs to 401 residues: Argininosuccinate synthase (401 aa).

Residue 9–17 (AYSGGLDTS) participates in ATP binding. Tyr-86 provides a ligand contact to L-citrulline. Residue Gly-116 participates in ATP binding. Positions 118, 122, and 123 each coordinate L-aspartate. Residue Asn-122 coordinates L-citrulline. L-citrulline-binding residues include Arg-126, Ser-174, Ser-183, Glu-259, and Tyr-271.

This sequence belongs to the argininosuccinate synthase family. Type 1 subfamily. As to quaternary structure, homotetramer.

It is found in the cytoplasm. It catalyses the reaction L-citrulline + L-aspartate + ATP = 2-(N(omega)-L-arginino)succinate + AMP + diphosphate + H(+). Its pathway is amino-acid biosynthesis; L-arginine biosynthesis; L-arginine from L-ornithine and carbamoyl phosphate: step 2/3. This chain is Argininosuccinate synthase, found in Bacillus anthracis (strain A0248).